The sequence spans 112 residues: Nitrogenase-stabilizing/protective protein NifW (112 aa).

This sequence belongs to the NifW family. As to quaternary structure, homotrimer; associates with NifD.

In terms of biological role, may protect the nitrogenase Fe-Mo protein from oxidative damage. This Burkholderia vietnamiensis (strain G4 / LMG 22486) (Burkholderia cepacia (strain R1808)) protein is Nitrogenase-stabilizing/protective protein NifW.